Here is a 125-residue protein sequence, read N- to C-terminus: Large ribosomal subunit protein bL17 (125 aa).

This sequence belongs to the bacterial ribosomal protein bL17 family. As to quaternary structure, part of the 50S ribosomal subunit. Contacts protein L32.

This chain is Large ribosomal subunit protein bL17, found in Marinomonas sp. (strain MWYL1).